We begin with the raw amino-acid sequence, 428 residues long: Gamma-glutamyl phosphate reductase (428 aa).

This sequence belongs to the gamma-glutamyl phosphate reductase family.

It localises to the cytoplasm. The enzyme catalyses L-glutamate 5-semialdehyde + phosphate + NADP(+) = L-glutamyl 5-phosphate + NADPH + H(+). It participates in amino-acid biosynthesis; L-proline biosynthesis; L-glutamate 5-semialdehyde from L-glutamate: step 2/2. Its function is as follows. Catalyzes the NADPH-dependent reduction of L-glutamate 5-phosphate into L-glutamate 5-semialdehyde and phosphate. The product spontaneously undergoes cyclization to form 1-pyrroline-5-carboxylate. In Chelativorans sp. (strain BNC1), this protein is Gamma-glutamyl phosphate reductase.